The primary structure comprises 1863 residues: E3 ubiquitin-protein ligase ubr3 (1863 aa).

The UBR-type zinc finger occupies 80–151 (TLCGLVWTAN…ESGFCNRHRL (72 aa)). Disordered regions lie at residues 302–330 (LDDSSKEEDQDGLQGVGQRKRVKLSSSTK), 970–995 (PEVERKRERERERETPPSTSSESATF), and 1128–1152 (IPPKKISPGDKKSMDKEERRQRARE). Composition is skewed to basic and acidic residues over residues 971 to 984 (EVERKRERERERET) and 1134 to 1152 (SPGDKKSMDKEERRQRARE). Residues 1270 to 1328 (DSSCLQSVSIGWDGGVYVQTCGHTLHIDCHKSYMESLRNDQVLQGISVDKGEFTCPLCR) form an RING-type; degenerate zinc finger.

It belongs to the E3 ubiquitin-protein ligase UBR1-like family.

It catalyses the reaction S-ubiquitinyl-[E2 ubiquitin-conjugating enzyme]-L-cysteine + [acceptor protein]-L-lysine = [E2 ubiquitin-conjugating enzyme]-L-cysteine + N(6)-ubiquitinyl-[acceptor protein]-L-lysine.. The protein operates within protein modification; protein ubiquitination. Its function is as follows. E3 ubiquitin-protein ligase which is a component of the N-end rule pathway. Recognizes and binds to proteins bearing specific N-terminal residues, leading to their ubiquitination and subsequent degradation. Positively regulates hedgehog/shh-signaling pathways that function in eye development, neuronal specification and somite development. Activation of shh up-regulates transcription of ubr3, which in turn promotes hedgehog/shh signaling possibly by controlling negative regulators such as Kif7. In Danio rerio (Zebrafish), this protein is E3 ubiquitin-protein ligase ubr3.